The primary structure comprises 510 residues: ATP synthase subunit alpha (510 aa).

169-176 lines the ATP pocket; it reads GDRQTGKT.

This sequence belongs to the ATPase alpha/beta chains family. In terms of assembly, F-type ATPases have 2 components, CF(1) - the catalytic core - and CF(0) - the membrane proton channel. CF(1) has five subunits: alpha(3), beta(3), gamma(1), delta(1), epsilon(1). CF(0) has three main subunits: a(1), b(2) and c(9-12). The alpha and beta chains form an alternating ring which encloses part of the gamma chain. CF(1) is attached to CF(0) by a central stalk formed by the gamma and epsilon chains, while a peripheral stalk is formed by the delta and b chains.

It is found in the cell inner membrane. It catalyses the reaction ATP + H2O + 4 H(+)(in) = ADP + phosphate + 5 H(+)(out). Produces ATP from ADP in the presence of a proton gradient across the membrane. The alpha chain is a regulatory subunit. The sequence is that of ATP synthase subunit alpha from Rickettsia rickettsii (strain Iowa).